Reading from the N-terminus, the 3010-residue chain is Genome polyprotein (3010 aa).

Residue S2 is modified to N-acetylserine; by host. The tract at residues 2 to 23 (STNPKPQRKTKRNTNRRPQDVK) is interaction with STAT1. An interaction with EIF2AK2/PKR region spans residues 2–58 (STNPKPQRKTKRNTNRRPQDVKFPGGGQIVGGVYLLPRRGPRLGVRATRKTSERSQP). Residues 2 to 59 (STNPKPQRKTKRNTNRRPQDVKFPGGGQIVGGVYLLPRRGPRLGVRATRKTSERSQPR) are interaction with DDX3X. The tract at residues 2-75 (STNPKPQRKT…PKARQPEGRA (74 aa)) is disordered. Residues 2 to 168 (STNPKPQRKT…EDGVNYATGN (167 aa)) are Cytoplasmic-facing. 2 short sequence motifs (nuclear localization signal) span residues 5 to 13 (PKPQRKTKR) and 38 to 43 (PRRGPR). The segment covering 7–16 (PQRKTKRNTN) has biased composition (basic residues). Low complexity predominate over residues 32-47 (GGVYLLPRRGPRLGVR). Phosphoserine; by host is present on S53. Short sequence motifs (nuclear localization signal) lie at residues 58–64 (PRGRRQP) and 66–71 (PKARQP). Position 99 is a phosphoserine; by host (S99). Residues 112–152 (PRRRSRNLGKVIDTLTCGFADLMGYIPLVGAPLGGVARALA) are important for endoplasmic reticulum and mitochondrial localization. A Phosphoserine; by host PKA modification is found at S116. Residues 122–173 (VIDTLTCGFADLMGYIPLVGAPLGGVARALAHGVRVVEDGVNYATGNLPGCS) form an interaction with APOA2 region. Residues 164-167 (YATG) form an important for lipid droplets localization region. A helical transmembrane segment spans residues 169–189 (LPGCSFSIFLLALLSCLTIPA). Positions 178 to 191 (LLALLSCLTIPASA) are cleaved as a propeptide — ER anchor for the core protein, removed in mature form by host signal peptidase. The Lumenal segment spans residues 190 to 358 (SAYEVRNVSG…AGAHWGVLAG (169 aa)). N-linked (GlcNAc...) asparagine; by host glycans are attached at residues N196, N209, N234, and N250. The tract at residues 265–296 (LVGAAAFCSAMYVGDLCGSVFLVSQLFTFSPR) is important for fusion. A glycan (N-linked (GlcNAc...) asparagine; by host) is linked at N305. The chain crosses the membrane as a helical span at residues 359-379 (LAYYSMVGNWAKVLIVMLLFA). Residues 380–725 (GVDGETRVTG…WDYIVILFLL (346 aa)) lie on the Lumenal side of the membrane. The interval 385–411 (TRVTGGQIARNAYSLTTLFSSGSAQNI) is HVR1. N-linked (GlcNAc...) (high mannose) asparagine; by host glycosylation is found at N417, N423, N430, and N448. Disulfide bonds link C429–C552, C452–C459, C486–C494, and C503–C508. The segment at 474 to 479 (YAEQGG) is HVR2. A CD81-binding 1 region spans residues 480–493 (QDQRPYCWHYAPKP). N532 carries an N-linked (GlcNAc...) (high mannose) asparagine; by host glycan. Residue N540 is glycosylated (N-linked (GlcNAc...) asparagine; by host). The interval 544-551 (PPQGNWFG) is CD81-binding 2. N556 carries N-linked (GlcNAc...) (high mannose) asparagine; by host glycosylation. C564 and C569 form a disulfide bridge. N-linked (GlcNAc...) (high mannose) asparagine; by host glycosylation occurs at N576. 3 disulfide bridges follow: C581–C585, C597–C620, and C607–C644. 2 N-linked (GlcNAc...) (high mannose) asparagine; by host glycosylation sites follow: N623 and N645. C652 and C677 are joined by a disulfide. The segment at 660 to 671 (LELSPLLLSTTE) is PKR/eIF2-alpha phosphorylation homology domain (PePHD). A helical transmembrane segment spans residues 726 to 746 (LADARVCACLWMMLLIAQAEA). Over 747-757 (ALENLVVLNAA) the chain is Lumenal. The chain crosses the membrane as a helical span at residues 758 to 778 (SVAGAHGILSFLVFFCAAWYI). At 779–781 (KGK) the chain is on the cytoplasmic side. The helical transmembrane segment at 782 to 803 (LVPGAAYAFYGVWPLLLLLLAL) threads the bilayer. At 804–813 (PPRAYAMERE) the chain is on the lumenal side. The helical transmembrane segment at 814 to 834 (MAASCGGAVFVGLVLLTLSPY) threads the bilayer. Residues 835-838 (YKEF) are Cytoplasmic-facing. A helical transmembrane segment spans residues 839 to 859 (LARLIWWLQYFITRAEAHLQV). Over 860–881 (WIPPLNIRGGRDAIILLACVVH) the chain is Lumenal. Residues 882–902 (PELIFDITKLLLAILGPLMVL) traverse the membrane as a helical segment. Positions 903 to 1026 (QASITQVPYF…SLEGQGWRLL (124 aa)) constitute a Peptidase C18 domain. The Cytoplasmic portion of the chain corresponds to 903-1657 (QASITQVPYF…CMSADLEVVT (755 aa)). The segment at 904 to 1206 (ASITQVPYFV…PVESMETTMR (303 aa)) is protease NS2-3. A lipid anchor (S-palmitoyl cysteine; by host) is attached at C922. Residues 929–949 (AGGHYVQMAFVKLTALTGTYV) are interaction with host SCPS1. Catalysis depends on for protease NS2 activity; shared with dimeric partner residues H952, E972, and C993. The 182-residue stretch at 1027–1208 (APITAYSQQT…ESMETTMRSP (182 aa)) folds into the Peptidase S29 domain. Active-site charge relay system; for serine protease NS3 activity residues include H1083 and D1107. Residues C1123 and C1125 each contribute to the Zn(2+) site. S1165 serves as the catalytic Charge relay system; for serine protease NS3 activity. Zn(2+) is bound by residues C1171 and H1175. Residues 1217–1369 (PAVPQTFQVA…PNIEEVALSN (153 aa)) form the Helicase ATP-binding domain. 1230-1237 (APTGSGKS) is a binding site for ATP. S1237 and E1317 together coordinate Mg(2+). Positions 1316-1319 (DECH) match the DECH box motif. The tract at residues 1486–1497 (QRRGRTGRGRRG) is RNA-binding. The helical transmembrane segment at 1658-1678 (STWVLVGGVLAALAAYCLTTG) threads the bilayer. The tract at residues 1679–1690 (SVVIVGRIILSG) is NS3-binding. Residues 1679–1805 (SVVIVGRIIL…SITSPLSTQN (127 aa)) lie on the Cytoplasmic side of the membrane. A helical membrane pass occupies residues 1806–1824 (TLLFNIWGGWVAAQLAPPS). Residues 1825-1828 (AASA) are Lumenal-facing. A helical transmembrane segment spans residues 1829 to 1849 (FVGAGIAGAAVGSIGLGKVLV). Position 1850 (D1850) is a topological domain, cytoplasmic. A helical membrane pass occupies residues 1851–1871 (ILAGYGAGVAGALVAFKIMSG). Residues 1872–1881 (EVPSTEDLVN) lie on the Lumenal side of the membrane. A helical transmembrane segment spans residues 1882–1902 (LLPAILSPGALVVGVVCAAIL). The Cytoplasmic segment spans residues 1903–1972 (RRHVGPGEGA…WINEDCSTPC (70 aa)). 2 S-palmitoyl cysteine; by host lipidation sites follow: C1968 and C1972. An intramembrane segment occupies 1973–2002 (SGSWLRDVWDWICTVLTDFKTWLQSKLLPR). Over 2003–2989 (LPGVPFFSCQ…YHSLSRARPR (987 aa)) the chain is Cytoplasmic. Positions 2011, 2029, 2031, and 2052 each coordinate Zn(2+). Residues 2120–2208 (EFFTEVDGVR…ASSSASQLSA (89 aa)) are FKBP8-binding. Residues 2120–2332 (EFFTEVDGVR…PIPPPRRKRT (213 aa)) are transcriptional activation. Residues 2135 to 2139 (PACKP) are interaction with non-structural protein 4A. An interaction with host SKP2 region spans residues 2189–2441 (RLARGSPPSL…PCAAEESKLP (253 aa)). At S2194 the chain carries Phosphoserine; by host; in p56. Phosphoserine; by host; in p58 is present on residues S2197, S2201, S2204, S2207, and S2210. The tract at residues 2210–2249 (SLKATCTTHHDSPDVDLIEANLLWRQEMGGNITRVESENK) is ISDR. The interaction with EIF2AK2/PKR stretch occupies residues 2210–2275 (SLKATCTTHH…REPSVAAEIL (66 aa)). Residues 2249–2306 (KVVILDSFDPLRAEEDEREPSVAAEILRKTKRFPPAMPIWARPDYNPPLLESWKDPDY) form an NS4B-binding region. The SH3-binding motif lies at 2322-2325 (PPIP). Positions 2326-2334 (PPRRKRTVV) match the Nuclear localization signal motif. K2350 is covalently cross-linked (Glycyl lysine isopeptide (Lys-Gly) (interchain with G-Cter in ubiquitin)). The segment covering 2351–2365 (TFGSSGSSAVDSGTA) has biased composition (polar residues). Positions 2351 to 2407 (TFGSSGSSAVDSGTATAPPDQASDDGDQGSDVESYSSMPPLEGEPGDPDLSDGSWST) are disordered. The V3 stretch occupies residues 2354–2377 (SSGSSAVDSGTATAPPDQASDDGD). A phosphoserine; by host mark is found at S2448 and S2461. In terms of domain architecture, RdRp catalytic spans 2633–2751 (PMGFSYDTRC…ICESAGTQED (119 aa)). Residues D2639, D2737, and D2738 each coordinate Mg(2+). Residues 2990–3010 (WFMLCLLLLSVGVGIYLLPNR) traverse the membrane as a helical segment.

It belongs to the hepacivirus polyprotein family. As to quaternary structure, homooligomer. Interacts with E1 (via C-terminus). Interacts with the non-structural protein 5A. Interacts (via N-terminus) with host STAT1 (via SH2 domain); this interaction results in decreased STAT1 phosphorylation and ubiquitin-mediated proteasome-dependent STAT1 degradation, leading to decreased IFN-stimulated gene transcription. Interacts with host STAT3; this interaction constitutively activates STAT3. Interacts with host LTBR receptor. Interacts with host TNFRSF1A receptor and possibly induces apoptosis. Interacts with host HNRPK. Interacts with host YWHAE. Interacts with host UBE3A/E6AP. Interacts with host DDX3X. Interacts with host APOA2. Interacts with host RXRA protein. Interacts with host SP110 isoform 3/Sp110b; this interaction sequesters the transcriptional corepressor SP110 away from the nucleus. Interacts with host CREB3 nuclear transcription protein; this interaction triggers cell transformation. Interacts with host ACY3. Interacts with host C1QR1. Interacts with host RBM24; this interaction, which enhances the interaction of the mature core protein with 5'-UTR, may inhibit viral translation and favor replication. Interacts with host EIF2AK2/PKR; this interaction induces the autophosphorylation of EIF2AK2. Part of the viral assembly initiation complex composed of NS2, E1, E2, NS3, NS4A, NS5A and the mature core protein. In terms of assembly, forms a heterodimer with envelope glycoprotein E2. Interacts with mature core protein. Interacts with protease NS2. The heterodimer E1/E2 interacts with host CLDN1; this interaction plays a role in viral entry into host cell. Interacts with host SPSB2 (via C-terminus). Part of the viral assembly initiation complex composed of NS2, E1, E2, NS3, NS4A, NS5A and the mature core protein. Interacts with host NEURL3; this interaction prevents E1 binding to glycoprotein E2. Forms a heterodimer with envelope glycoprotein E1. Interacts with host CD81 and SCARB1 receptors; these interactions play a role in viral entry into host cell. Interacts with host EIF2AK2/PKR; this interaction inhibits EIF2AK2 and probably allows the virus to evade the innate immune response. Interacts with host CD209/DC-SIGN and CLEC4M/DC-SIGNR. Interact with host SPCS1; this interaction is essential for viral particle assembly. Interacts with protease NS2. The heterodimer E1/E2 interacts with host CLDN1; this interaction plays a role in viral entry into host cell. Part of the viral assembly initiation complex composed of NS2, E1, E2, NS3, NS4A, NS5A and the mature core protein. Interacts with host SLC3A2/4F2hc; the interaction may facilitate viral entry into host cell. Interacts with human PLSCR1. As to quaternary structure, homohexamer. Homoheptamer. Interacts with protease NS2. In terms of assembly, homodimer. Interacts with host SPCS1; this interaction is essential for viral particle assembly. Interacts with envelope glycoprotein E1. Interacts with envelope glycoprotein E2. Interacts with viroporin p7. Interacts with serine protease/helicase NS3. Part of the replication complex composed of NS2, NS3, NS4A, NS4B, NS5A and the RNA-directed RNA polymerase embedded in an ER-derived membranous web. Part of the viral assembly initiation complex composed of NS2, E1, E2, NS3, NS4A, NS5A and the mature core protein. Interacts with protease NS2. Interacts with non-structural protein 4A; this interaction stabilizes the folding of NS3 serine protease. NS3-NS4A interaction is essential for NS3 activation and allows membrane anchorage of the latter. NS3/NS4A complex also prevents phosphorylation of host IRF3, thus preventing the establishment of dsRNA induced antiviral state. Interacts with host MAVS; this interaction leads to the cleavage and inhibition of host MAVS. Interacts with host TICAM1; this interaction leads to the cleavage and inhibition of host TICAM1. Interacts with host TANK-binding kinase/TBK1; this interaction results in the inhibition of the association between TBK1 and IRF3, which leads to the inhibition of IRF3 activation. Interacts with host RBM24. Part of the replication complex composed of NS2, NS3, NS4A, NS4B, NS5A and the RNA-directed RNA polymerase embedded in an ER-derived membranous web. Part of the viral assembly initiation complex composed of NS2, E1, E2, NS3, NS4A, NS5A and the mature core protein. As to quaternary structure, interacts with NS3 serine protease; this interaction stabilizes the folding of NS3 serine protease. NS3-NS4A interaction is essential for NS3 activation and allows membrane anchorage of the latter. Interacts with non-structural protein 5A (via N-terminus). Part of the replication complex composed of NS2, NS3, NS4A, NS4B, NS5A and the RNA-directed RNA polymerase embedded in an ER-derived membranous web. Part of the viral assembly initiation complex composed of NS2, E1, E2, NS3, NS4A, NS5A and the mature core protein. In terms of assembly, homomultimer. Interacts with non-structural protein NS5A. Interacts with host PLA2G4C; this interaction likely initiates the recruitment of replication complexes to lipid droplets. Interacts with host STING; this interaction disrupts the interaction between STING and TBK1 thereby suppressing the interferon signaling. Part of the replication complex composed of NS2, NS3, NS4A, NS4B, NS5A and the RNA-directed RNA polymerase embedded in an ER-derived membranous web. Monomer. Homodimer; dimerization is required for RNA-binding. Interacts with the mature core protein. Interacts (via N-terminus) with non-structural protein 4A. Interacts with non-structural protein 4B. Interacts (via region D2) with RNA-directed RNA polymerase. Part of the viral assembly initiation complex composed of NS2, E1, E2, NS3, NS4A, NS5A and the mature core protein. Part of the replication complex composed of NS2, NS3, NS4A, NS4B, NS5A and the RNA-directed RNA polymerase embedded in an ER-derived membranous web. Interacts with host GRB2. Interacts with host BIN1. Interacts with host PIK3R1. Interacts with host SRCAP. Interacts with host FKBP8. Interacts (via C-terminus) with host VAPB (via MSP domain). Interacts with host EIF2AK2/PKR; this interaction leads to disruption of EIF2AK2 dimerization by NS5A and probably allows the virus to evade the innate immune response. Interacts (via N-terminus) with host PACSIN2 (via N-terminus); this interaction attenuates protein kinase C alpha-mediated phosphorylation of PACSIN2 by disrupting the interaction between PACSIN2 and PRKCA. Interacts (via N-terminus) with host SRC kinase (via SH2 domain). Interacts with most Src-family kinases. Interacts with host IFI27 and SKP2; promotes the ubiquitin-mediated proteasomal degradation of NS5A. Interacts with host GPS2. Interacts with host TNFRSF21; this interaction allows the modulation by the virus of JNK, p38 MAPK, STAT3, and Akt signaling pathways in a DR6-dependent manner. Interacts (via N-terminus) with host CIDEB (via N-terminus); this interaction seems to regulate the association of HCV particles with APOE. Interacts with host CHKA/Choline Kinase-alpha; CHKA bridges host PI4KA and NS5A and potentiates NS5A-stimulated PI4KA activity, which then facilitates the targeting of the ternary complex to the ER for viral replication. Interacts with host SPSB2 (via C-terminus); this interaction targets NS5A for ubiquitination and degradation. Interacts with host RAB18; this interaction may promote the association of NS5A and other replicase components with lipid droplets. Interacts (via region D2) with host PPIA/CYPA; the interaction stimulates RNA-binding ability of NS5A and is dependent on the peptidyl-prolyl cis-trans isomerase activity of PPIA/CYPA. Interacts with host TRIM14; this interaction induces the degradation of NS5A. As to quaternary structure, homooligomer. Interacts with non-structural protein 5A. Interacts with host VAPB. Interacts with host PRK2/PKN2. Interacts with host HNRNPA1 and SEPT6; these interactions facilitate viral replication. Part of the replication complex composed of NS2, NS3, NS4A, NS4B, NS5A and the RNA-directed RNA polymerase. The cofactor is Zn(2+). Requires Mg(2+) as cofactor. Post-translationally, specific enzymatic cleavages in vivo yield mature proteins. The structural proteins, core, E1, E2 and p7 are produced by proteolytic processing by host signal peptidases. The core protein precursor is synthesized as a 23 kDa, which is retained in the ER membrane through the hydrophobic signal peptide. Cleavage by the signal peptidase releases the 21 kDa mature core protein. The cleavage of the core protein precursor occurs between aminoacids 176 and 188 but the exact cleavage site is not known. Some degraded forms of the core protein appear as well during the course of infection. The other proteins (p7, NS2, NS3, NS4A, NS4B, NS5A and NS5B) are cleaved by the viral proteases. Autoprocessing between NS2 and NS3 is mediated by the NS2 cysteine protease catalytic domain and regulated by the NS3 N-terminal domain. In terms of processing, phosphorylated by host PKC and PKA. Ubiquitinated; mediated by UBE3A and leading to core protein subsequent proteasomal degradation. Post-translationally, highly N-glycosylated. In terms of processing, palmitoylation is required for NS2/3 autoprocessing and E2 recruitment to membranes. Palmitoylated. This modification may play a role in its polymerization or in protein-protein interactions. Post-translationally, phosphorylated on serines in a basal form termed p56. p58 is a hyperphosphorylated form of p56. p56 and p58 coexist in the cell in roughly equivalent amounts. Hyperphosphorylation is dependent on the presence of NS4A. Host CSNK1A1/CKI-alpha or RPS6KB1 kinases may be responsible for NS5A phosphorylation. In terms of processing, tyrosine phosphorylation is essential for the interaction with host SRC. Ubiquitinated. Ubiquitination, most probably at Lys-2350, mediated by host IFI27 and SKP2 leads to proteasomal degradation, restricting viral infection. Ubiquitination by host TRIM22 leads to interruption of viral replication. Post-translationally, the N-terminus is phosphorylated by host PRK2/PKN2.

It localises to the host endoplasmic reticulum membrane. The protein resides in the host mitochondrion membrane. Its subcellular location is the virion. The protein localises to the host cytoplasm. It is found in the host nucleus. It localises to the host lipid droplet. The protein resides in the virion membrane. Its subcellular location is the host mitochondrion. The protein localises to the host cell membrane. It is found in the host perinuclear region. It carries out the reaction Hydrolysis of four peptide bonds in the viral precursor polyprotein, commonly with Asp or Glu in the P6 position, Cys or Thr in P1 and Ser or Ala in P1'.. The enzyme catalyses a ribonucleoside 5'-triphosphate + H2O = a ribonucleoside 5'-diphosphate + phosphate + H(+). The catalysed reaction is ATP + H2O = ADP + phosphate + H(+). It catalyses the reaction RNA(n) + a ribonucleoside 5'-triphosphate = RNA(n+1) + diphosphate. Inhibited by the antiviral drug hexamethylene amiloride. Inhibition by amantadine appears to be genotype-dependent. Also inhibited by long-alkyl-chain iminosugar derivatives. Its activity is regulated as follows. Activity is up-regulated by PRK2/PKN2-mediated phosphorylation. In terms of biological role, packages viral RNA to form a viral nucleocapsid, and promotes virion budding. Participates in the viral particle production as a result of its interaction with the non-structural protein 5A. Binds RNA and may function as a RNA chaperone to induce the RNA structural rearrangements taking place during virus replication. Modulates viral translation initiation by interacting with viral IRES and 40S ribosomal subunit. Affects various cell signaling pathways, host immunity and lipid metabolism. Prevents the establishment of cellular antiviral state by blocking the interferon-alpha/beta (IFN-alpha/beta) and IFN-gamma signaling pathways and by blocking the formation of phosphorylated STAT1 and promoting ubiquitin-mediated proteasome-dependent degradation of STAT1. Activates STAT3 leading to cellular transformation. Regulates the activity of cellular genes, including c-myc and c-fos. May repress the promoter of p53, and sequester CREB3 and SP110 isoform 3/Sp110b in the cytoplasm. Represses cell cycle negative regulating factor CDKN1A, thereby interrupting an important check point of normal cell cycle regulation. Targets transcription factors involved in the regulation of inflammatory responses and in the immune response: suppresses TNF-induced NF-kappa-B activation, and activates AP-1. Binds to dendritic cells (DCs) via C1QR1, resulting in down-regulation of T-lymphocytes proliferation. Alters lipid metabolism by interacting with hepatocellular proteins involved in lipid accumulation and storage. Induces up-regulation of FAS promoter activity, and thereby contributes to the increased triglyceride accumulation in hepatocytes (steatosis). Forms a heterodimer with envelope glycoprotein E2, which mediates virus attachment to the host cell, virion internalization through clathrin-dependent endocytosis and fusion with host membrane. Fusion with the host cell is most likely mediated by both E1 and E2, through conformational rearrangements of the heterodimer required for fusion rather than a classical class II fusion mechanism. E1/E2 heterodimer binds host apolipoproteins such as APOB and APOE thereby forming a lipo-viro-particle (LVP). APOE associated to the LVP allows the initial virus attachment to cell surface receptors such as the heparan sulfate proteoglycans (HSPGs), syndecan-1 (SDC1), syndecan-1 (SDC2), the low-density lipoprotein receptor (LDLR) and scavenger receptor class B type I (SCARB1). The cholesterol transfer activity of SCARB1 allows E2 exposure and binding of E2 to SCARB1 and the tetraspanin CD81. E1/E2 heterodimer binding on CD81 activates the epithelial growth factor receptor (EGFR) signaling pathway. Diffusion of the complex E1-E2-EGFR-SCARB1-CD81 to the cell lateral membrane allows further interaction with Claudin 1 (CLDN1) and occludin (OCLN) to finally trigger HCV entry. Functionally, forms a heterodimer with envelope glycoprotein E1, which mediates virus attachment to the host cell, virion internalization through clathrin-dependent endocytosis and fusion with host membrane. Fusion with the host cell is most likely mediated by both E1 and E2, through conformational rearrangements of the heterodimer required for fusion rather than a classical class II fusion mechanism. The interaction between envelope glycoprotein E2 and host apolipoprotein E/APOE allows the proper assembly, maturation and infectivity of the viral particles. This interaction is probably promoted via the up-regulation of cellular autophagy by the virus. E1/E2 heterodimer binds host apolipoproteins such as APOB and APOE thereby forming a lipo-viro-particle (LVP). APOE associated to the LVP allows the initial virus attachment to cell surface receptors such as the heparan sulfate proteoglycans (HSPGs), syndecan-1 (SDC1), syndecan-1 (SDC2), the low-density lipoprotein receptor (LDLR) and scavenger receptor class B type I (SCARB1). The cholesterol transfer activity of SCARB1 allows E2 exposure and binding of E2 to SCARB1 and the tetraspanin CD81. E1/E2 heterodimer binding on CD81 activates the epithelial growth factor receptor (EGFR) signaling pathway. Diffusion of the complex E1-E2-EGFR-SCARB1-CD81 to the cell lateral membrane allows further interaction with Claudin 1 (CLDN1) and occludin (OCLN) to finally trigger HCV entry. Inhibits host EIF2AK2/PKR activation, preventing the establishment of an antiviral state. Viral ligand for CD209/DC-SIGN and CLEC4M/DC-SIGNR, which are respectively found on dendritic cells (DCs), and on liver sinusoidal endothelial cells and macrophage-like cells of lymph node sinuses. These interactions allow the capture of circulating HCV particles by these cells and subsequent facilitated transmission to permissive cells such as hepatocytes and lymphocyte subpopulations. The interaction between E2 and host amino acid transporter complex formed by SLC3A2 and SLC7A5/LAT1 may facilitate viral entry into host cell. Its function is as follows. Ion channel protein that acts as a viroporin and plays an essential role in the assembly, envelopment and secretion of viral particles. Regulates the host cell secretory pathway, which induces the intracellular retention of viral glycoproteins and favors assembly of viral particles. Creates a pore in acidic organelles and releases Ca(2+) and H(+) in the cytoplasm of infected cells, leading to a productive viral infection. High levels of cytoplasmic Ca(2+) may trigger membrane trafficking and transport of viral ER-associated proteins to viroplasms, sites of viral genome replication. This ionic imbalance induces the assembly of the inflammasome complex, which triggers the maturation of pro-IL-1beta into IL-1beta through the action of caspase-1. Targets also host mitochondria and induces mitochondrial depolarization. In addition of its role as a viroporin, acts as a lipid raft adhesion factor. In terms of biological role, cysteine protease required for the proteolytic auto-cleavage between the non-structural proteins NS2 and NS3. The N-terminus of NS3 is required for the function of NS2 protease (active region NS2-3). Promotes the initiation of viral particle assembly by mediating the interaction between structural and non-structural proteins. Displays three enzymatic activities: serine protease with a chymotrypsin-like fold, NTPase and RNA helicase. NS3 serine protease, in association with NS4A, is responsible for the cleavages of NS3-NS4A, NS4A-NS4B, NS4B-NS5A and NS5A-NS5B. The NS3/NS4A complex prevents phosphorylation of host IRF3, thus preventing the establishment of dsRNA induced antiviral state. The NS3/NS4A complex induces host amino acid transporter component SLC3A2, thus contributing to HCV propagation. NS3 RNA helicase binds to RNA and unwinds both dsDNA and dsRNA in the 3' to 5' direction, and likely resolves RNA complicated stable secondary structures in the template strand. Binds a single ATP and catalyzes the unzipping of a single base pair of dsRNA. Inhibits host antiviral proteins TBK1 and IRF3 thereby preventing the establishment of an antiviral state. Cleaves host MAVS/CARDIF thereby preventing the establishment of an antiviral state. Cleaves host TICAM1/TRIF, thereby disrupting TLR3 signaling and preventing the establishment of an antiviral state. Functionally, peptide cofactor which forms a non-covalent complex with the N-terminal of NS3 serine protease. The NS3/NS4A complex prevents phosphorylation of host IRF3, thus preventing the establishment of dsRNA induced antiviral state. The NS3/NS4A complex induces host amino acid transporter component SLC3A2, thus contributing to HCV propagation. Its function is as follows. Induces a specific membrane alteration that serves as a scaffold for the virus replication complex. This membrane alteration gives rise to the so-called ER-derived membranous web that contains the replication complex. NS4B self-interaction contributes to its function in membranous web formation. Promotes host TRIF protein degradation in a CASP8-dependent manner thereby inhibiting host TLR3-mediated interferon signaling. Disrupts the interaction between STING and TBK1 contributing to the inhibition of interferon signaling. In terms of biological role, phosphorylated protein that is indispensable for viral replication and assembly. Both hypo- and hyperphosphorylated states are required for the viral life cycle. The hyperphosphorylated form of NS5A is an inhibitor of viral replication. Involved in RNA-binding and especially in binding to the viral genome. Zinc is essential for RNA-binding. Participates in the viral particle production as a result of its interaction with the mature viral core protein. Its interaction with host VAPB may target the viral replication complex to vesicles. Down-regulates viral IRES translation initiation. Mediates interferon resistance, presumably by interacting with and inhibiting host EIF2AK2/PKR. Prevents BIN1-induced apoptosis. Acts as a transcriptional activator of some host genes important for viral replication when localized in the nucleus. Via the interaction with host PACSIN2, modulates lipid droplet formation in order to promote virion assembly. Modulates TNFRSF21/DR6 signaling pathway for viral propagation. RNA-dependent RNA polymerase that performs primer-template recognition and RNA synthesis during viral replication. Initiates RNA transcription/replication at a flavin adenine dinucleotide (FAD), resulting in a 5'- FAD cap on viral RNAs. In this way, recognition of viral 5' RNA by host pattern recognition receptors can be bypassed, thereby evading activation of antiviral pathways. The chain is Genome polyprotein from Homo sapiens (Human).